We begin with the raw amino-acid sequence, 462 residues long: Argininosuccinate lyase (462 aa).

This sequence belongs to the lyase 1 family. Argininosuccinate lyase subfamily.

It is found in the cytoplasm. The enzyme catalyses 2-(N(omega)-L-arginino)succinate = fumarate + L-arginine. It functions in the pathway amino-acid biosynthesis; L-arginine biosynthesis; L-arginine from L-ornithine and carbamoyl phosphate: step 3/3. In Bacillus cereus (strain AH820), this protein is Argininosuccinate lyase.